We begin with the raw amino-acid sequence, 353 residues long: Ribosomal RNA small subunit methyltransferase C (353 aa).

This sequence belongs to the methyltransferase superfamily. RsmC family. In terms of assembly, monomer.

It is found in the cytoplasm. It catalyses the reaction guanosine(1207) in 16S rRNA + S-adenosyl-L-methionine = N(2)-methylguanosine(1207) in 16S rRNA + S-adenosyl-L-homocysteine + H(+). In terms of biological role, specifically methylates the guanine in position 1207 of 16S rRNA in the 30S particle. This Marinomonas sp. (strain MWYL1) protein is Ribosomal RNA small subunit methyltransferase C.